A 357-amino-acid polypeptide reads, in one-letter code: MRLLQKFTRKSSLKQSGSSSNYAYVTARVRAMKSNLLPREVYPRLMNMGIDEITRFIEESQYKQDVDELARTYDGVDLFEHALNRNLAVTFTKLINISEGELNYLISEYLRKYDIWSIKTILRGKYCGASVEEINDSIVSAGQLSYPFLLSLSEKESYESIIDALSGTDYYPTLKEYDGTNLSDIENKLDKMYYTGLSTTVNNPKSNDSKLFSKFIRTEIDIKNLSTLFRLKNAGVEKDEIADLILEGGLHLSIKEIEKLLPLPFSEFVQSLEKYPYWEDISGIVKTEMDSLIELETQLTRSNIKSASSFSHVYPLSIVPIMDYILNKTNEVHNLRIILRGKAANLDEEIIRNQLVI.

It belongs to the V-ATPase V0D/AC39 subunit family. As to quaternary structure, has multiple subunits with at least A(3), B(3), C, D, E, F, H, I and proteolipid K(x).

It is found in the cell membrane. Component of the A-type ATP synthase that produces ATP from ADP in the presence of a proton gradient across the membrane. This chain is A-type ATP synthase subunit C, found in Methanococcoides burtonii (strain DSM 6242 / NBRC 107633 / OCM 468 / ACE-M).